The sequence spans 469 residues: Pup--protein ligase (469 aa).

Glu9 is a Mg(2+) binding site. Arg53 contacts ATP. Tyr55 contributes to the Mg(2+) binding site. The active-site Proton acceptor is Asp57. A Mg(2+)-binding site is contributed by Glu63. Residues Thr66 and Trp430 each coordinate ATP.

The protein belongs to the Pup ligase/Pup deamidase family. Pup-conjugating enzyme subfamily.

It carries out the reaction ATP + [prokaryotic ubiquitin-like protein]-L-glutamate + [protein]-L-lysine = ADP + phosphate + N(6)-([prokaryotic ubiquitin-like protein]-gamma-L-glutamyl)-[protein]-L-lysine.. Its pathway is protein degradation; proteasomal Pup-dependent pathway. It functions in the pathway protein modification; protein pupylation. Its function is as follows. Catalyzes the covalent attachment of the prokaryotic ubiquitin-like protein modifier Pup to the proteasomal substrate proteins, thereby targeting them for proteasomal degradation. This tagging system is termed pupylation. The ligation reaction involves the side-chain carboxylate of the C-terminal glutamate of Pup and the side-chain amino group of a substrate lysine. This is Pup--protein ligase from Kocuria rhizophila (strain ATCC 9341 / DSM 348 / NBRC 103217 / DC2201).